A 623-amino-acid chain; its full sequence is MWVALGMLWLLALGGPHQAWSFCPSQCSCSLHILSDGSKARTVVCSDPDLTLPPASIPPDTCKLRLERTAIRRVPGETFRPLSRLEQLWLPYNALSELSTLMLRGLRRLRELRLPGNHLVTFPWAALKDTPQLQLLDLQANRLSTLPPEAVHFLENLTFLDLSNNQLMRLPEELLDTWAHLKTGPYLSSRRTRLVLGLQDNPWVCDCRLYDLVHLLDGWASNLIFIEARLRCGSPRSLAGVAFSQLELRKCQSPELRPGVTSIISPLGSTVLLRCGATGIPGPEMSWRRANGRPLNGTVHQEVSSDGSSWTLLDLPVVSLFDSGDYICQAKNFLGASETLISLIVTEPQTSTEYTGIPGALWARTGEGAEAAAYNNKLVARHVPHVPEPVALATKPSVPSIKEELPLQNFQMDVPGEFSREPSEHQETQMVRSLKVVGDTYHSVSLVWKAPQAGNTTAFSVLYAVFGQRDMRRMTVEAGKTSVTIEGLAPKTKYVACVCVRGLVPTKEQCVIFSTDEVVDAEGTQRLINMVVISVAAIIALPPTLLVCCGALRRRCHKCRAGGSAEASGAYVNLERLGHSEDGSEELSRSSLSEADRLLSARSSLDSQVLGVRGGRRINEYFC.

A signal peptide spans 1–21 (MWVALGMLWLLALGGPHQAWS). The region spanning 22–59 (FCPSQCSCSLHILSDGSKARTVVCSDPDLTLPPASIPP) is the LRRNT domain. Over 22–526 (FCPSQCSCSL…EVVDAEGTQR (505 aa)) the chain is Lumenal. LRR repeat units follow at residues 60–81 (DTCK…TFRP), 84–105 (RLEQ…MLRG), 108–128 (RLRE…AALK), 132–153 (QLQL…AVHF), and 156–177 (NLTF…LLDT). Residue asparagine 156 is glycosylated (N-linked (GlcNAc...) asparagine). Positions 201–253 (NPWVCDCRLYDLVHLLDGWASNLIFIEARLRCGSPRSLAGVAFSQLELRKCQS) constitute an LRRCT domain. Positions 266–332 (PLGSTVLLRC…SGDYICQAKN (67 aa)) constitute an Ig-like C2-type domain. An intrachain disulfide couples cysteine 275 to cysteine 328. Residues asparagine 296 and asparagine 455 are each glycosylated (N-linked (GlcNAc...) asparagine). The Fibronectin type-III domain occupies 430-518 (MVRSLKVVGD…QCVIFSTDEV (89 aa)). One copy of the LRR 6 repeat lies at 525–548 (QRLINMVVISVAAIIALPPTLLVC). A helical transmembrane segment spans residues 527–547 (LINMVVISVAAIIALPPTLLV). At 548 to 623 (CCGALRRRCH…GGRRINEYFC (76 aa)) the chain is on the cytoplasmic side.

In terms of assembly, homodimer. Interacts with LRIT2; may form a heterodimer with LRIT2. Interacts (via its N-terminal extracellular domain) with metabotropic glutamate receptor GRM6. Interacts (via its extreme C-terminus) with the scaffold protein FRMPD2 (via the third PDZ domain); the interaction leads to their colocalization in photoreceptor synapses. Retina, outer segments of photoreceptor cells.

The protein resides in the endoplasmic reticulum membrane. It localises to the cell projection. It is found in the dendrite. Photoreceptor synaptic protein essential for normal vision. Involved in synapse formation in cone photoreceptor cells. This is Leucine-rich repeat, immunoglobulin-like domain and transmembrane domain-containing protein 1 (Lrit1) from Rattus norvegicus (Rat).